Reading from the N-terminus, the 179-residue chain is Large ribosomal subunit protein uL5 (179 aa).

This sequence belongs to the universal ribosomal protein uL5 family. As to quaternary structure, part of the 50S ribosomal subunit; part of the 5S rRNA/L5/L18/L25 subcomplex. Contacts the 5S rRNA and the P site tRNA. Forms a bridge to the 30S subunit in the 70S ribosome.

Functionally, this is one of the proteins that bind and probably mediate the attachment of the 5S RNA into the large ribosomal subunit, where it forms part of the central protuberance. In the 70S ribosome it contacts protein S13 of the 30S subunit (bridge B1b), connecting the 2 subunits; this bridge is implicated in subunit movement. Contacts the P site tRNA; the 5S rRNA and some of its associated proteins might help stabilize positioning of ribosome-bound tRNAs. This Hamiltonella defensa subsp. Acyrthosiphon pisum (strain 5AT) protein is Large ribosomal subunit protein uL5.